Consider the following 64-residue polypeptide: Large ribosomal subunit protein bL35 (64 aa).

Residues 20–42 (GRVKREKMYGSHNLEKKNRKRTR) form a disordered region. Over residues 25-35 (EKMYGSHNLEK) the composition is skewed to basic and acidic residues.

Belongs to the bacterial ribosomal protein bL35 family.

This is Large ribosomal subunit protein bL35 from Chlorobium phaeobacteroides (strain BS1).